The following is an 888-amino-acid chain: Serine/threonine-protein phosphatase 1 regulatory subunit 10 (888 aa).

The segment at 1–348 (MGSGPIDPKE…EPAPPAEPMD (348 aa)) is interaction with TOX4. The TFIIS N-terminal domain occupies 73–147 (KLLNNWLTYS…SDWMAVIRSQ (75 aa)). Disordered stretches follow at residues 147–213 (QSST…STGL), 247–270 (SATA…NTAP), 306–400 (KKKK…KTVT), and 534–853 (VETL…HGGD). 2 stretches are compositionally biased toward basic and acidic residues: residues 153-166 (AEKD…EGKS) and 174-196 (PLTE…EKPK). Lys-179 participates in a covalent cross-link: Glycyl lysine isopeptide (Lys-Gly) (interchain with G-Cter in SUMO2). Residues 248–258 (ATAAPGDAAPP) show a composition bias toward low complexity. Lys-262 participates in a covalent cross-link: Glycyl lysine isopeptide (Lys-Gly) (interchain with G-Cter in SUMO2). Ser-313 is modified (phosphoserine). Polar residues predominate over residues 325 to 334 (KTSTEQSTAK). At Ser-382 the chain carries Phosphoserine. The necessary for interaction with PPP1CA stretch occupies residues 388–417 (QLTRKGRKRKTVTWPEEGKLREYFYFELDE). Residues 393 to 408 (GRKRKTVTWPEEGKLR) are necessary for interaction with PPP1CC. The PP1-binding motif signature appears at 394 to 423 (RKRKTVTWPEEGKLREYFYFELDETERVNV). Thr-398 carries the phosphothreonine modification. The tract at residues 418 to 619 (TERVNVNKIK…LKQMLVPHGL (202 aa)) is interaction with WDR82. A compositionally biased stretch (gly residues) spans 540-551 (GGSGGSPDGAGG). A phosphoserine mark is found at Ser-545 and Ser-591. Residues 583–595 (EILTSIMGSPNSH) show a composition bias toward polar residues. Residues 596–611 (PSEELLKQPDYSDKLK) are compositionally biased toward basic and acidic residues. Positions 644 to 655 (PPGPGGPMPGPH) are enriched in pro residues. Arg-665 bears the Omega-N-methylarginine mark. Over residues 674-690 (RGGDPFWDGPGDPMRGG) the composition is skewed to low complexity. An omega-N-methylarginine mark is found at Arg-693 and Arg-737. 2 stretches are compositionally biased toward gly residues: residues 724–762 (ARGG…GSMG) and 784–794 (GPGGNMGGSGG). Residues 811 to 851 (PHDVPSHRGHDHRGPPPHEHRGHDGHGGGGHRGHDGGHSHG) are compositionally biased toward basic and acidic residues. Residues 854–882 (MSNRPVCRHFMMKGNCRYENNCAFYHPGV) form a C3H1-type zinc finger.

Component of the PNUTS-PP1 complex (also named PTW/PP1 complex), composed of PPP1R10/PNUTS, TOX4, WDR82, and PPP1CA (or PPP1CB or PPP1CC). In terms of processing, phosphorylated on Ser-398 by PKA within the region necessary for interaction with PPP1CA.

It is found in the nucleus. The protein resides in the chromosome. Functionally, substrate-recognition component of the PNUTS-PP1 protein phosphatase complex, a protein phosphatase 1 (PP1) complex that promotes RNA polymerase II transcription pause-release, allowing transcription elongation. Promoter-proximal pausing by RNA polymerase II is a transcription halt following transcription initiation but prior to elongation, which acts as a checkpoint to control that transcripts are favorably configured for transcriptional elongation. The PNUTS-PP1 complex mediates the release of RNA polymerase II from promoter-proximal region of genes by catalyzing dephosphorylation of proteins involved in transcription, such as AFF4, CDK9, MEPCE, INTS12, NCBP1, POLR2M/GDOWN1 and SUPT6H. The PNUTS-PP1 complex also regulates RNA polymerase II transcription termination by mediating dephosphorylation of SUPT5H in termination zones downstream of poly(A) sites, thereby promoting deceleration of RNA polymerase II transcription. PNUTS-PP1 complex is also involved in the response to replication stress by mediating dephosphorylation of POLR2A at 'Ser-5' of the CTD, promoting RNA polymerase II degradation. The PNUTS-PP1 complex also plays a role in the control of chromatin structure and cell cycle progression during the transition from mitosis into interphase. PNUTS-PP1 complex mediates dephosphorylation of MYC, promoting MYC stability by preventing MYC ubiquitination by the SCF(FBXW7) complex. In addition to acts as a substrate-recognition component, PPP1R10/PNUTS also acts as a nuclear targeting subunit for the PNUTS-PP1 complex. In some context, PPP1R10/PNUTS also acts as an inhibitor of protein phosphatase 1 (PP1) activity by preventing access to substrates, such as RB. The chain is Serine/threonine-protein phosphatase 1 regulatory subunit 10 from Mus musculus (Mouse).